A 341-amino-acid polypeptide reads, in one-letter code: MGEFMNKKDMFVLGIETSCDETAAAIVKNGREIVANVVASQMESHQRFGGVVPEIASRHHVEQITLVLEETMKQANMDISQLDAIAVTEGPGLVGALLIGVNAAKALAFAHRIPLVGVHHIAGHIYANQLVQEMKFPLLALVVSGGHTELIYMKEHGIFEVIGETRDDAAGEAYDKVARALQLPYPGGPHIDRLAKQGKPIIDLPRAWLEEGSYDFSFSGLKSAVINTLHNAKQRGEMIRPEDMAASFQASVVEVLVRKTIEAAMHYSVKQILLAGGVAANEGLRTQLQKQMDQLPEVELVIPPLSLCTDNAAMIAAAGTVLFQQGKRATMALNANPSLLL.

Fe cation is bound by residues H120 and H124. Substrate is bound by residues 142-146 (VVSGG), D175, G188, D192, and N281. D310 lines the Fe cation pocket.

Belongs to the KAE1 / TsaD family. Requires Fe(2+) as cofactor.

It is found in the cytoplasm. The enzyme catalyses L-threonylcarbamoyladenylate + adenosine(37) in tRNA = N(6)-L-threonylcarbamoyladenosine(37) in tRNA + AMP + H(+). Required for the formation of a threonylcarbamoyl group on adenosine at position 37 (t(6)A37) in tRNAs that read codons beginning with adenine. Is involved in the transfer of the threonylcarbamoyl moiety of threonylcarbamoyl-AMP (TC-AMP) to the N6 group of A37, together with TsaE and TsaB. TsaD likely plays a direct catalytic role in this reaction. The sequence is that of tRNA N6-adenosine threonylcarbamoyltransferase from Anoxybacillus flavithermus (strain DSM 21510 / WK1).